The primary structure comprises 285 residues: Chitinase 4 (285 aa).

Residues 1 to 27 (MAAKMATMVALVFGLALLLSAAAPAAA) form the signal peptide. A Chitin-binding type-1 domain is found at 28–62 (QNCGCQDGYCCSQWGYCGTTEAYCGQGCQSGPCWG). 7 disulfide bridges follow: cysteine 30/cysteine 38, cysteine 32/cysteine 44, cysteine 37/cysteine 51, cysteine 55/cysteine 60, cysteine 104/cysteine 153, cysteine 166/cysteine 175, and cysteine 253/cysteine 285. Catalysis depends on glutamate 148, which acts as the Proton donor.

Belongs to the glycosyl hydrolase 19 family. Chitinase class IV subfamily. Expressed at low levels in leaves, sheaths and meristems.

The enzyme catalyses Random endo-hydrolysis of N-acetyl-beta-D-glucosaminide (1-&gt;4)-beta-linkages in chitin and chitodextrins.. Hydrolyzes chitin and may function in reproductive organs during embryogenesis and seed maturation. The protein is Chitinase 4 (Cht4) of Oryza sativa subsp. japonica (Rice).